The sequence spans 72 residues: Translation initiation factor IF-1 (72 aa).

The S1-like domain maps to 1 to 72 (MSKDDVIQMQ…SRARIVFRAK (72 aa)).

It belongs to the IF-1 family. As to quaternary structure, component of the 30S ribosomal translation pre-initiation complex which assembles on the 30S ribosome in the order IF-2 and IF-3, IF-1 and N-formylmethionyl-tRNA(fMet); mRNA recruitment can occur at any time during PIC assembly.

It localises to the cytoplasm. Its function is as follows. One of the essential components for the initiation of protein synthesis. Stabilizes the binding of IF-2 and IF-3 on the 30S subunit to which N-formylmethionyl-tRNA(fMet) subsequently binds. Helps modulate mRNA selection, yielding the 30S pre-initiation complex (PIC). Upon addition of the 50S ribosomal subunit IF-1, IF-2 and IF-3 are released leaving the mature 70S translation initiation complex. This Albidiferax ferrireducens (strain ATCC BAA-621 / DSM 15236 / T118) (Rhodoferax ferrireducens) protein is Translation initiation factor IF-1.